A 201-amino-acid polypeptide reads, in one-letter code: Small ribosomal subunit protein uS4c (201 aa).

Positions 89–152 constitute an S4 RNA-binding domain; that stretch reads MRLDNILFRL…NSRTLVQNLL (64 aa).

The protein belongs to the universal ribosomal protein uS4 family. Part of the 30S ribosomal subunit. Contacts protein S5. The interaction surface between S4 and S5 is involved in control of translational fidelity.

It is found in the plastid. The protein resides in the chloroplast. One of the primary rRNA binding proteins, it binds directly to 16S rRNA where it nucleates assembly of the body of the 30S subunit. In terms of biological role, with S5 and S12 plays an important role in translational accuracy. The polypeptide is Small ribosomal subunit protein uS4c (rps4) (Olimarabidopsis pumila (Dwarf rocket)).